We begin with the raw amino-acid sequence, 410 residues long: Serine/threonine transporter SstT (410 aa).

Transmembrane regions (helical) follow at residues 15–35 (GSLV…AWLS), 49–69 (FVNA…ISSI), 82–102 (PIVM…VVAS), 118–138 (IVPP…MVTN), 142–162 (AVMK…GFAF), 190–210 (FAPV…GFDA), 217–237 (LLGL…PLLV), 299–319 (MAGA…TLGI), 331–351 (LVAS…LLLI), and 358–378 (FGIP…IGVL).

Belongs to the dicarboxylate/amino acid:cation symporter (DAACS) (TC 2.A.23) family.

The protein resides in the cell inner membrane. The enzyme catalyses L-serine(in) + Na(+)(in) = L-serine(out) + Na(+)(out). It carries out the reaction L-threonine(in) + Na(+)(in) = L-threonine(out) + Na(+)(out). Functionally, involved in the import of serine and threonine into the cell, with the concomitant import of sodium (symport system). This Erwinia tasmaniensis (strain DSM 17950 / CFBP 7177 / CIP 109463 / NCPPB 4357 / Et1/99) protein is Serine/threonine transporter SstT.